Here is a 428-residue protein sequence, read N- to C-terminus: Adenosylhomocysteinase (428 aa).

Substrate-binding residues include T62, D134, and E159. 160-162 (TTT) provides a ligand contact to NAD(+). K189 and D193 together coordinate substrate. NAD(+)-binding positions include N194, 223 to 228 (GYGWCG), E246, N281, 302 to 304 (SGH), and N349.

It belongs to the adenosylhomocysteinase family. The cofactor is NAD(+).

Its subcellular location is the cytoplasm. The catalysed reaction is S-adenosyl-L-homocysteine + H2O = L-homocysteine + adenosine. It functions in the pathway amino-acid biosynthesis; L-homocysteine biosynthesis; L-homocysteine from S-adenosyl-L-homocysteine: step 1/1. Functionally, may play a key role in the regulation of the intracellular concentration of adenosylhomocysteine. The protein is Adenosylhomocysteinase of Gloeobacter violaceus (strain ATCC 29082 / PCC 7421).